A 226-amino-acid polypeptide reads, in one-letter code: Transmembrane gamma-carboxyglutamic acid protein 4 (226 aa).

Residues 1–17 (MFPLLIVLSQLPRLTLA) form the signal peptide. A propeptide spanning residues 18 to 49 (VPHCIRSLKDSEHAPEEVFASKEAANIFMHRR) is cleaved from the precursor. Topologically, residues 50 to 113 (LLNNRFDLEL…GSDVNKEKID (64 aa)) are extracellular. The Gla domain occupies 52-98 (NNRFDLELFTPGDLERECYEEFCSYEEAREILGDDENTIKFWQTYSI). Residues Cys69 and Cys74 are joined by a disulfide bond. Position 72 is a 4-carboxyglutamate (Glu72). A helical membrane pass occupies residues 114-134 (VMSLLTGLIVAGVFLVIFGLV). The Cytoplasmic segment spans residues 135–226 (GYYVCLTKCK…FKKSMSLPSH (92 aa)). Ser164 is subject to Phosphoserine. The short motif at 186–189 (LPSY) is the LPXY motif; mediates binding to WW domain-containing proteins element. The short motif at 204-207 (PPPY) is the PPXY motif; mediates binding to WW domain-containing proteins element.

It belongs to the commissureless family. In terms of assembly, interacts (via cytoplasmic domain) with WW domain-containing proteins MAGI1, MAGI3, NEDD4, NEDD4L, WWTR1/TAZ and YAP1. Gamma-carboxyglutamate residues are formed by vitamin K dependent carboxylation. These residues are essential for the binding of calcium.

Its subcellular location is the endoplasmic reticulum-Golgi intermediate compartment membrane. It is found in the cell membrane. Its function is as follows. May control axon guidance across the CNS. Prevents the delivery of ROBO1 at the cell surface and down-regulates its expression. The protein is Transmembrane gamma-carboxyglutamic acid protein 4 (Prrg4) of Mus musculus (Mouse).